Reading from the N-terminus, the 184-residue chain is Adenine phosphoribosyltransferase (184 aa).

It belongs to the purine/pyrimidine phosphoribosyltransferase family. As to quaternary structure, homodimer.

It localises to the cytoplasm. It catalyses the reaction AMP + diphosphate = 5-phospho-alpha-D-ribose 1-diphosphate + adenine. It functions in the pathway purine metabolism; AMP biosynthesis via salvage pathway; AMP from adenine: step 1/1. Its function is as follows. Catalyzes a salvage reaction resulting in the formation of AMP, that is energically less costly than de novo synthesis. The sequence is that of Adenine phosphoribosyltransferase from Shewanella baltica (strain OS223).